The sequence spans 165 residues: MTRNKYFILLSCLMVLSPSQGQEAEEDLPSARITCPEGSNAYSSYCYYFMEDHLSWAEADLFCQNMNSGYLVSVLSQAEGNFLASLIKESGTTAANVWIGLHDPKNNRRWHWSSGSLFLYKSWDTGYPNNSNRGYCVSVTSNSGYKKWRDNSCDAQLSFVCKFKA.

The N-terminal stretch at 1–21 (MTRNKYFILLSCLMVLSPSQG) is a signal peptide. Glutamine 22 carries the pyrrolidone carboxylic acid modification. The 131-residue stretch at 33–163 (ITCPEGSNAY…DAQLSFVCKF (131 aa)) folds into the C-type lectin domain. 3 disulfides stabilise this stretch: cysteine 35–cysteine 46, cysteine 63–cysteine 161, and cysteine 136–cysteine 153. Residue asparagine 129 is glycosylated (N-linked (GlcNAc...) asparagine).

Expressed only in regenerating islets, but not in normal pancreatic islets, insulinomas or regenerating liver.

The protein localises to the secreted. Functionally, might act as an inhibitor of spontaneous calcium carbonate precipitation. The polypeptide is Lithostathine (Reg1) (Rattus norvegicus (Rat)).